The following is a 191-amino-acid chain: uncharacterized protein (191 aa).

Residues 6-66 (GLTQKMIVDA…ELAVRGLTKL (61 aa)) form the HTH tetR-type domain. Residues 29-48 (SLAALSKKMNVRPPSLYNHI) constitute a DNA-binding region (H-T-H motif).

This is an uncharacterized protein from Bacillus subtilis (strain 168).